We begin with the raw amino-acid sequence, 93 residues long: UPF0147 protein PF0239 (93 aa).

The protein belongs to the UPF0147 family.

This is UPF0147 protein PF0239 from Pyrococcus furiosus (strain ATCC 43587 / DSM 3638 / JCM 8422 / Vc1).